A 107-amino-acid chain; its full sequence is Replication initiation control protein YabA (107 aa).

Zn(2+) is bound by residues His-81, Cys-83, Cys-97, and Cys-100.

It belongs to the YabA family. Homotetramer. Interacts with both DnaA and DnaN, acting as a bridge between these two proteins. Zn(2+) is required as a cofactor.

It is found in the cytoplasm. The protein resides in the nucleoid. Involved in control of chromosome replication initiation. Inhibits the cooperative binding of DnaA to the oriC region, thus negatively regulating initiation of chromosome replication. Inhibits the ability of DnaA-ATP to form a helix on DNA; does not disassemble preformed DnaA-DNA helices. Decreases the residence time of DnaA on the chromosome at its binding sites (oriC, replication forks and promoter-binding sites). Tethers DnaA to the replication machinery via the DNA polymerase beta sliding clamp subunit (dnaN). Associates with oriC and other DnaA targets on the chromosome in a DnaA-dependent manner. In Streptococcus pyogenes serotype M18 (strain MGAS8232), this protein is Replication initiation control protein YabA.